The primary structure comprises 308 residues: Porphobilinogen deaminase (308 aa).

The residue at position 240 (Cys240) is an S-(dipyrrolylmethanemethyl)cysteine.

Belongs to the HMBS family. In terms of assembly, monomer. Requires dipyrromethane as cofactor.

It carries out the reaction 4 porphobilinogen + H2O = hydroxymethylbilane + 4 NH4(+). The protein operates within porphyrin-containing compound metabolism; protoporphyrin-IX biosynthesis; coproporphyrinogen-III from 5-aminolevulinate: step 2/4. Functionally, tetrapolymerization of the monopyrrole PBG into the hydroxymethylbilane pre-uroporphyrinogen in several discrete steps. The sequence is that of Porphobilinogen deaminase from Campylobacter hominis (strain ATCC BAA-381 / DSM 21671 / CCUG 45161 / LMG 19568 / NCTC 13146 / CH001A).